We begin with the raw amino-acid sequence, 174 residues long: Large ribosomal subunit protein bL12cy (174 aa).

A chloroplast-targeting transit peptide spans 1 to 45 (MASTTFSSAFSILSLPSSSPSPPPWAPRTLPVANRRRRAAAVAST).

Belongs to the bacterial ribosomal protein bL12 family.

It is found in the plastid. It localises to the chloroplast. This is Large ribosomal subunit protein bL12cy (RPL12-2) from Secale cereale (Rye).